The chain runs to 61 residues: Small ribosomal subunit protein uS14 (61 aa).

Residues Cys-24, Cys-27, Cys-40, and Cys-43 each contribute to the Zn(2+) site.

This sequence belongs to the universal ribosomal protein uS14 family. Zinc-binding uS14 subfamily. Part of the 30S ribosomal subunit. Contacts proteins S3 and S10. Zn(2+) serves as cofactor.

In terms of biological role, binds 16S rRNA, required for the assembly of 30S particles and may also be responsible for determining the conformation of the 16S rRNA at the A site. The chain is Small ribosomal subunit protein uS14 from Mycoplasma genitalium (strain ATCC 33530 / DSM 19775 / NCTC 10195 / G37) (Mycoplasmoides genitalium).